Consider the following 376-residue polypeptide: Chaperone protein DnaJ (376 aa).

A J domain is found at 5–72 (DFYEVLGVPK…QKRAAYDQYG (68 aa)). Residues 136 to 214 (GKEAQIRIPS…CHGQGRVKKQ (79 aa)) form a CR-type zinc finger. Zn(2+) is bound by residues cysteine 149, cysteine 152, cysteine 166, cysteine 169, cysteine 188, cysteine 191, cysteine 202, and cysteine 205. CXXCXGXG motif repeat units lie at residues 149 to 156 (CETCHGSG), 166 to 173 (CGTCQGSG), 188 to 195 (CPHCRGTG), and 202 to 209 (CTACHGQG). Disordered regions lie at residues 227 to 246 (DGMR…GGPP) and 354 to 376 (KKGG…SFFS). Residues 237–246 (GEPGTNGGPP) are compositionally biased toward gly residues. Over residues 367–376 (WTDRLKSFFS) the composition is skewed to basic and acidic residues.

Belongs to the DnaJ family. In terms of assembly, homodimer. Zn(2+) is required as a cofactor.

It localises to the cytoplasm. Its function is as follows. Participates actively in the response to hyperosmotic and heat shock by preventing the aggregation of stress-denatured proteins and by disaggregating proteins, also in an autonomous, DnaK-independent fashion. Unfolded proteins bind initially to DnaJ; upon interaction with the DnaJ-bound protein, DnaK hydrolyzes its bound ATP, resulting in the formation of a stable complex. GrpE releases ADP from DnaK; ATP binding to DnaK triggers the release of the substrate protein, thus completing the reaction cycle. Several rounds of ATP-dependent interactions between DnaJ, DnaK and GrpE are required for fully efficient folding. Also involved, together with DnaK and GrpE, in the DNA replication of plasmids through activation of initiation proteins. The protein is Chaperone protein DnaJ of Acidovorax ebreus (strain TPSY) (Diaphorobacter sp. (strain TPSY)).